We begin with the raw amino-acid sequence, 233 residues long: Large ribosomal subunit protein uL1 (233 aa).

It belongs to the universal ribosomal protein uL1 family. Part of the 50S ribosomal subunit.

Functionally, binds directly to 23S rRNA. The L1 stalk is quite mobile in the ribosome, and is involved in E site tRNA release. Protein L1 is also a translational repressor protein, it controls the translation of the L11 operon by binding to its mRNA. The polypeptide is Large ribosomal subunit protein uL1 (Photorhabdus laumondii subsp. laumondii (strain DSM 15139 / CIP 105565 / TT01) (Photorhabdus luminescens subsp. laumondii)).